Consider the following 964-residue polypeptide: Iron-responsive element-binding protein 2 (964 aa).

[4Fe-4S] cluster is bound by residues cysteine 513, cysteine 579, and cysteine 582.

Belongs to the aconitase/IPM isomerase family. Interacts with RBCK1 only in iron-rich conditions. Interacts (when associated with the 4Fe-4S) with FBXL5. Interacts with CIAO1 and CIAO2A. [4Fe-4S] cluster serves as cofactor. Ubiquitinated and degraded by the proteasome in presence of high level of iron and oxygen. Ubiquitinated by a SCF complex containing FBXL5. Upon iron and oxygen depletion FBXL5 is degraded, preventing ubiquitination and allowing its RNA-binding activity.

It localises to the cytoplasm. In terms of biological role, RNA-binding protein that binds to iron-responsive elements (IRES), which are stem-loop structures found in the 5'-UTR of ferritin, and delta aminolevulinic acid synthase mRNAs, and in the 3'-UTR of transferrin receptor mRNA. Binding to the IRE element in ferritin results in the repression of its mRNA translation. Binding of the protein to the transferrin receptor mRNA inhibits the degradation of this otherwise rapidly degraded mRNA. This is Iron-responsive element-binding protein 2 (IREB2) from Sus scrofa (Pig).